The chain runs to 252 residues: 2-succinyl-6-hydroxy-2,4-cyclohexadiene-1-carboxylate synthase (252 aa).

This sequence belongs to the AB hydrolase superfamily. MenH family. Monomer.

It catalyses the reaction 5-enolpyruvoyl-6-hydroxy-2-succinyl-cyclohex-3-ene-1-carboxylate = (1R,6R)-6-hydroxy-2-succinyl-cyclohexa-2,4-diene-1-carboxylate + pyruvate. Its pathway is quinol/quinone metabolism; 1,4-dihydroxy-2-naphthoate biosynthesis; 1,4-dihydroxy-2-naphthoate from chorismate: step 3/7. It functions in the pathway quinol/quinone metabolism; menaquinone biosynthesis. Catalyzes a proton abstraction reaction that results in 2,5-elimination of pyruvate from 2-succinyl-5-enolpyruvyl-6-hydroxy-3-cyclohexene-1-carboxylate (SEPHCHC) and the formation of 2-succinyl-6-hydroxy-2,4-cyclohexadiene-1-carboxylate (SHCHC). This Klebsiella pneumoniae subsp. pneumoniae (strain ATCC 700721 / MGH 78578) protein is 2-succinyl-6-hydroxy-2,4-cyclohexadiene-1-carboxylate synthase.